Consider the following 124-residue polypeptide: V-type proton ATPase subunit F 1 (124 aa).

Phosphoserine is present on serine 87.

It belongs to the V-ATPase F subunit family. In terms of assembly, V-ATPase is a heteromultimeric enzyme made up of two complexes: the ATP-hydrolytic V1 complex and the proton translocation V0 complex. The V1 complex consists of three catalytic AB heterodimers that form a heterohexamer, three peripheral stalks each consisting of EG heterodimers, one central rotor including subunits D and F, and the regulatory subunits C and H. The proton translocation complex V0 consists of the proton transport subunit a, a ring of proteolipid subunits c9c'', rotary subunit d, subunits e and f, and the accessory subunits VhaAC45 and ATP6AP2.

Functionally, subunit of the V1 complex of vacuolar(H+)-ATPase (V-ATPase), a multisubunit enzyme composed of a peripheral complex (V1) that hydrolyzes ATP and a membrane integral complex (V0) that translocates protons. V-ATPase is responsible for acidifying and maintaining the pH of intracellular compartments and in some cell types, is targeted to the plasma membrane, where it is responsible for acidifying the extracellular environment. The sequence is that of V-type proton ATPase subunit F 1 (Vha14-1) from Drosophila melanogaster (Fruit fly).